The following is a 337-amino-acid chain: Mitochondrial glutathione transporter SLC25A40 (337 aa).

3 Solcar repeats span residues 14 to 132, 140 to 224, and 234 to 328; these read VTPL…LSAF, NETR…LKRW, and PTFM…GKSF. 6 helical membrane passes run 20 to 40, 104 to 124, 146 to 166, 200 to 221, 240 to 260, and 299 to 319; these read MIAS…LDVV, LWSG…IYFT, IVAG…LELI, WAPT…YENL, FTSG…FDVV, and GLFT…AIMI.

Belongs to the mitochondrial carrier (TC 2.A.29) family.

Its subcellular location is the mitochondrion inner membrane. It carries out the reaction glutathione(in) = glutathione(out). In terms of biological role, probable mitochondrial transporter required for glutathione import into mitochondria. Glutathione, which plays key roles in oxidative metabolism, is produced exclusively in the cytosol and is imported in many organelles. Mitochondrial glutathione is required for the activity and stability of proteins containing iron-sulfur clusters, as well as erythropoiesis. The chain is Mitochondrial glutathione transporter SLC25A40 from Mus musculus (Mouse).